Consider the following 517-residue polypeptide: Superoxide-generating NADPH oxidase heavy chain subunit A (517 aa).

Topologically, residues 1–19 (MRLPTKEEIQRYWVNEGNK) are cytoplasmic. A helical transmembrane segment spans residues 20–40 (LILVILYTLGNIAAFVYTFVH). At 41 to 62 (YYNSPAFEVVGYGVCFARGCAQ) the chain is on the extracellular side. In terms of domain architecture, Ferric oxidoreductase spans 58–201 (RGCAQLLKLN…LFVVFFGLLV (144 aa)). Residues 63-83 (LLKLNCALILVPVLRNLLSFL) form a helical membrane-spanning segment. Topologically, residues 84-97 (RGTFLNNYVPFDKN) are cytoplasmic. The helical transmembrane segment at 98 to 118 (IVFHKLIAWVICFATFGHVMA) threads the bilayer. Residues His101 and His115 each contribute to the heme site. Over 119–149 (HFNNFRLYQDITPQEYKRILGIDYPNLTPIK) the chain is Extracellular. A helical transmembrane segment spans residues 150–170 (YAFATLAGWTGHVVCIVMVLM). Residues 171-184 (YTSAVESIRRPMFE) lie on the Cytoplasmic side of the membrane. The helical transmembrane segment at 185–205 (GFWYTHHLFVVFFGLLVVHGL) threads the bilayer. Heme contacts are provided by His190 and His203. Residue His206 is a topological domain, extracellular. A helical membrane pass occupies residues 207 to 227 (SILEPTSFWKWVIGPCALYIV). Topologically, residues 228 to 517 (ERLIRLLRSK…CRFHYNKENF (290 aa)) are cytoplasmic. An FAD-binding FR-type domain is found at 229–349 (RLIRLLRSKK…DGPFGAASEE (121 aa)). 283 to 289 (HPFTITS) lines the FAD pocket.

Composed of a heavy chain and a light chain. It depends on FAD as a cofactor.

Its subcellular location is the membrane. Its function is as follows. Critical component of the membrane-bound oxidase that generates superoxide. It is the terminal component of a respiratory chain that transfers single electrons from cytoplasmic NADPH across the plasma membrane to molecular oxygen on the exterior. The chain is Superoxide-generating NADPH oxidase heavy chain subunit A (noxA) from Dictyostelium discoideum (Social amoeba).